The following is a 222-amino-acid chain: L-serine dehydratase, beta chain (222 aa).

The region spanning threonine 150–valine 222 is the ACT domain.

It belongs to the iron-sulfur dependent L-serine dehydratase family. As to quaternary structure, heterooctamer of four alpha chains and four beta chains. The cofactor is [4Fe-4S] cluster.

It carries out the reaction L-serine = pyruvate + NH4(+). It participates in carbohydrate biosynthesis; gluconeogenesis. This chain is L-serine dehydratase, beta chain (sdhB), found in Peptoniphilus asaccharolyticus (Peptostreptococcus asaccharolyticus).